Here is a 626-residue protein sequence, read N- to C-terminus: Forkhead box protein O1 (626 aa).

Residues 1–11 (MAEAPLPPPPG) show a composition bias toward pro residues. 4 disordered regions span residues 1-57 (MAEA…PAAG), 90-142 (DIRQ…SRRN), 218-319 (SSWW…MPEQ), and 484-519 (PTYG…MTHN). Low complexity-rich tracts occupy residues 37–48 (NPSSSANSSPAP) and 101–133 (QHPQ…AQQP). The segment at residues 144-238 (WGNLSYADLI…KNGKSPRRRA (95 aa)) is a DNA-binding region (fork-head). The segment covering 248 to 259 (AKSRGRAAKKKA) has biased composition (basic residues). Over residues 262 to 277 (QSSQDGSSDSPGSQFS) the composition is skewed to low complexity. Polar residues-rich tracts occupy residues 298-310 (RPRT…TISG) and 484-494 (PTYGSQPTHNK).

In terms of processing, phosphorylated by AKT1; insulin-induced. IGF1 rapidly induces phosphorylation of Thr-28, Ser-240 and Ser-303. Phosphorylation of Ser-240 decreases DNA-binding activity and promotes the phosphorylation of Thr-28, and Ser-303, which leads to nuclear exclusion and loss of function. Phosphorylation of Ser-313 is independent of IGF1 and leads to reduced function.

It is found in the cytoplasm. Its subcellular location is the nucleus. Transcription factor that regulates metabolic homeostasis in response to oxidative stress. Binds to the consensus sequence 5'-TT[G/A]TTTTG-3' and the related Daf-16 family binding element (DBE) with consensus sequence 5'-TT[G/A]TTTAC-3'. Main regulator of redox balance and osteoblast numbers and controls bone mass. Orchestrates the endocrine function of the skeleton in regulating glucose metabolism. Also acts as a key regulator of chondrogenic commitment of skeletal progenitor cells in response to lipid availability: when lipids levels are low, translocates to the nucleus and promotes expression of sox9, which induces chondrogenic commitment and suppresses fatty acid oxidation. Acts synergistically with atf4 to suppress osteocalcin/bglap activity, increasing glucose levels and triggering glucose intolerance and insulin insensitivity. Also suppresses the transcriptional activity of runx2, an upstream activator of osteocalcin/bglap. May act as a positive regulator of apoptosis in cardiac smooth muscle cells as a result of its transcriptional activation of pro-apoptotic genes. In Xenopus tropicalis (Western clawed frog), this protein is Forkhead box protein O1.